A 450-amino-acid chain; its full sequence is Bifunctional protein GlmU (450 aa).

A pyrophosphorylase region spans residues 1–229 (MGVALIVLAA…EAETLGINTR (229 aa)). UDP-N-acetyl-alpha-D-glucosamine contacts are provided by residues 8-11 (LAAG), Lys22, Gln75, 80-81 (GT), 103-105 (YGD), Gly141, Glu155, Asn170, and Asn227. Asp105 lines the Mg(2+) pocket. Mg(2+) is bound at residue Asn227. A linker region spans residues 230 to 250 (TELAAAEQAFQARARARALED). Residues 251–450 (GVTLADPATT…RARKSAKGAQ (200 aa)) are N-acetyltransferase. Arg316 and Lys334 together coordinate UDP-N-acetyl-alpha-D-glucosamine. Catalysis depends on His346, which acts as the Proton acceptor. UDP-N-acetyl-alpha-D-glucosamine is bound by residues Tyr349 and Asn360. Residues Ala363, 369 to 370 (NY), Ser388, Thr406, and Arg423 contribute to the acetyl-CoA site.

The protein in the N-terminal section; belongs to the N-acetylglucosamine-1-phosphate uridyltransferase family. In the C-terminal section; belongs to the transferase hexapeptide repeat family. As to quaternary structure, homotrimer. Requires Mg(2+) as cofactor.

Its subcellular location is the cytoplasm. It catalyses the reaction alpha-D-glucosamine 1-phosphate + acetyl-CoA = N-acetyl-alpha-D-glucosamine 1-phosphate + CoA + H(+). The catalysed reaction is N-acetyl-alpha-D-glucosamine 1-phosphate + UTP + H(+) = UDP-N-acetyl-alpha-D-glucosamine + diphosphate. Its pathway is nucleotide-sugar biosynthesis; UDP-N-acetyl-alpha-D-glucosamine biosynthesis; N-acetyl-alpha-D-glucosamine 1-phosphate from alpha-D-glucosamine 6-phosphate (route II): step 2/2. It participates in nucleotide-sugar biosynthesis; UDP-N-acetyl-alpha-D-glucosamine biosynthesis; UDP-N-acetyl-alpha-D-glucosamine from N-acetyl-alpha-D-glucosamine 1-phosphate: step 1/1. The protein operates within bacterial outer membrane biogenesis; LPS lipid A biosynthesis. Functionally, catalyzes the last two sequential reactions in the de novo biosynthetic pathway for UDP-N-acetylglucosamine (UDP-GlcNAc). The C-terminal domain catalyzes the transfer of acetyl group from acetyl coenzyme A to glucosamine-1-phosphate (GlcN-1-P) to produce N-acetylglucosamine-1-phosphate (GlcNAc-1-P), which is converted into UDP-GlcNAc by the transfer of uridine 5-monophosphate (from uridine 5-triphosphate), a reaction catalyzed by the N-terminal domain. The protein is Bifunctional protein GlmU of Dinoroseobacter shibae (strain DSM 16493 / NCIMB 14021 / DFL 12).